We begin with the raw amino-acid sequence, 83 residues long: U4-theraphotoxin-Hhn1x (83 aa).

The first 20 residues, 1–20 (MTLIAILTCAAALVLHTTAA), serve as a signal peptide directing secretion. Residues 21–46 (EELEAESQLMEVGMPDTELEAVDEER) constitute a propeptide that is removed on maturation. Cystine bridges form between Cys50–Cys64, Cys54–Cys75, and Cys69–Cys80.

This sequence belongs to the neurotoxin 12 (Hwtx-2) family. 02 (Hwtx-2) subfamily. Expressed by the venom gland.

The protein resides in the secreted. Functionally, postsynaptic neurotoxin. In Cyriopagopus hainanus (Chinese bird spider), this protein is U4-theraphotoxin-Hhn1x.